An 878-amino-acid chain; its full sequence is NUT family member 2E (878 aa).

5 disordered regions span residues 273–324, 417–511, 527–560, 622–757, and 775–878; these read WSQG…DDSC, QKSQ…VPEE, LLGPSLGATGEPEKQREEGKVKQPQEEDWTPPDP, RLPP…EEEE, and WLPQ…HCSQ. Composition is skewed to pro residues over residues 278–288 and 427–444; these read PLPPPPPPAAQ and CLPPPATPRLEPRGPPAP. 2 stretches are compositionally biased toward basic and acidic residues: residues 537-551 and 622-631; these read EPEKQREEGKVKQPQ and RLPPLKEKQH.

The protein belongs to the NUT family.

The polypeptide is NUT family member 2E (NUTM2E) (Homo sapiens (Human)).